A 274-amino-acid polypeptide reads, in one-letter code: Putative pyruvate, phosphate dikinase regulatory protein (274 aa).

153-160 (GISRTSKT) serves as a coordination point for ADP.

The protein belongs to the pyruvate, phosphate/water dikinase regulatory protein family. PDRP subfamily.

It catalyses the reaction N(tele)-phospho-L-histidyl/L-threonyl-[pyruvate, phosphate dikinase] + ADP = N(tele)-phospho-L-histidyl/O-phospho-L-threonyl-[pyruvate, phosphate dikinase] + AMP + H(+). It carries out the reaction N(tele)-phospho-L-histidyl/O-phospho-L-threonyl-[pyruvate, phosphate dikinase] + phosphate + H(+) = N(tele)-phospho-L-histidyl/L-threonyl-[pyruvate, phosphate dikinase] + diphosphate. Functionally, bifunctional serine/threonine kinase and phosphorylase involved in the regulation of the pyruvate, phosphate dikinase (PPDK) by catalyzing its phosphorylation/dephosphorylation. This is Putative pyruvate, phosphate dikinase regulatory protein from Bartonella henselae (strain ATCC 49882 / DSM 28221 / CCUG 30454 / Houston 1) (Rochalimaea henselae).